The following is a 513-amino-acid chain: Sugar transport protein 7 (513 aa).

Over 1-26 (MAGGSFGPTGVAKERAEQYQGKVTSY) the chain is Cytoplasmic. 12 helical membrane passes run 27–47 (VIIA…DIGI), 84–104 (GLAA…LVAS), 121–141 (ISFL…MLLA), 144–164 (IMLG…LSEV), 171–191 (GGLN…ANMV), 205–225 (LSLG…YFLP), 286–306 (LVMA…SILF), 324–344 (YSSA…IGLV), 351–371 (ALLI…AVIL), 387–407 (VIVV…WGPL), 427–447 (ITVA…LGLL), and 452–472 (FGIF…VYFL). The Cytoplasmic segment spans residues 473-513 (LPETKGVPIEEMTLLWSKHWFWKKVLPDATNLEDESKNVSV).

This sequence belongs to the major facilitator superfamily. Sugar transporter (TC 2.A.1.1) family.

The protein resides in the cell membrane. Functionally, mediates an active uptake of hexoses, probably by sugar/hydrogen symport. In Arabidopsis thaliana (Mouse-ear cress), this protein is Sugar transport protein 7 (STP7).